Reading from the N-terminus, the 212-residue chain is Protein FAM177A1 (212 aa).

At methionine 1 the chain carries N-acetylmethionine. Residues 1–11 show a composition bias toward basic and acidic residues; the sequence is MEGEPASREEG. The disordered stretch occupies residues 1–33; it reads MEGEPASREEGEAVNASGAAAASAFRESAQQMS. Positions 13–29 are enriched in low complexity; it reads AVNASGAAAASAFRESA. The residue at position 69 (serine 69) is a Phosphoserine. Position 70 is a phosphothreonine (threonine 70). Residues 135–172 are a coiled coil; that stretch reads IDEYYRMKKEEEEEEEENRMSEEAERQYQQNKLQADSV. The disordered stretch occupies residues 146 to 179; sequence EEEEEENRMSEEAERQYQQNKLQADSVVQSDQPE. Over residues 161–179 the composition is skewed to polar residues; the sequence is QYQQNKLQADSVVQSDQPE.

It belongs to the FAM177 family.

The polypeptide is Protein FAM177A1 (FAM177A1) (Bos taurus (Bovine)).